Reading from the N-terminus, the 853-residue chain is NADH-quinone oxidoreductase subunit G 2 (853 aa).

One can recognise a 2Fe-2S ferredoxin-type domain in the interval 1–78; sequence MIKVTIDEQS…GMVVRTNTPL (78 aa). Cys34, Cys45, Cys48, and Cys62 together coordinate [2Fe-2S] cluster. The 4Fe-4S His(Cys)3-ligated-type domain occupies 78–117; the sequence is LIEETRSSMLDMLLANHPLDCPICDKGGECELQDMVMAYG. The [4Fe-4S] cluster site is built by His94, Cys98, Cys101, Cys107, Cys148, Cys151, Cys154, Cys198, Cys224, Cys227, Cys231, and Cys259. 4Fe-4S ferredoxin-type domains are found at residues 139–170 and 179–209; these read PVII…LGTV and TGFE…FPYR. A 4Fe-4S Mo/W bis-MGD-type domain is found at 217–273; the sequence is LAETDTICPHCGTGCQLTVGARKGEFMRVRSDWEHGVNRETLCVRGRFGLDFIESRD.

This sequence belongs to the complex I 75 kDa subunit family. [2Fe-2S] cluster is required as a cofactor. [4Fe-4S] cluster serves as cofactor.

The catalysed reaction is a quinone + NADH + 5 H(+)(in) = a quinol + NAD(+) + 4 H(+)(out). NDH-1 shuttles electrons from NADH, via FMN and iron-sulfur (Fe-S) centers, to quinones in the respiratory chain. The immediate electron acceptor for the enzyme in this species is believed to be ubiquinone. Couples the redox reaction to proton translocation (for every two electrons transferred, four hydrogen ions are translocated across the cytoplasmic membrane), and thus conserves the redox energy in a proton gradient. In Rhizobium meliloti (strain 1021) (Ensifer meliloti), this protein is NADH-quinone oxidoreductase subunit G 2 (nuoG2).